The following is a 783-amino-acid chain: MASLDDPGEVREGFLCPLCLKDLQSFYQLQSHYEEEHLEDRDVKGQIKNLVQKARKAKNKLLKREGDDRVEPGTQGYESFSYGGVDPYMWEPQELGAMRSHLSDFKKHRAARIDHYVVEVNKLIIRLEKLTAFDRTNTETSKIRAIEKSVVPWVNDQDVPFCPDCGNKFSIRNRRHHCRLCGSIMCKKCMELIGLPLAHKLTSASKDSLSTHTSPSQSPNSVHGSRRGSISSMSSVSSVLDEKDDDRIRCCTHCKDKLLKREQQMDEKEHTPDIVKLYEKLRLCMEKVDQKAPEYIRMAASLNAGETTYNLEHANDLRVEVQKVYELIDALSKKILTLGLNQDPSPHPNTLRLQRMIRYSATLFVQEKLLGLMSLPTKEQFEELKKKRKQDLEQKRTVERQAALESRRKLEERQSGLASHTANGDVRSLRGIPPPLRKAEGWLPLSEGQGQSEDPDPLLQQIYNITSFIRQAKAAGRTDEVRTLQENLRQLQDEYDQQQTEKAIELSRKQAEEEELQREQLQMLRKRELEREQEQFLAASLQTRTRVLELREVIPFQLEASRGPHIDLSYSLDQDSSPVQSSTAPDILTPGSALAPMHLWSGPPALGQETLPQSTMSQQSDKASLNPFDEDDLSSPTEGAISPAAVEAFLGPPAAVTKEYNPFEEDAEEEEVAELGAGNPFTDPDSPAPNPFDEDDGPRPASPAAPGNPFEECPSTNPFEVDSDSGMEAEEHIEEELLLQQIDNIKAYIFDAKQCGRMDEVEVLTENLRELKCTLAKQKGAPN.

The residue at position 2 (Ala2) is an N-acetylalanine. Position 3 is a phosphoserine (Ser3). A C2H2-type zinc finger spans residues 14-37 (FLCPLCLKDLQSFYQLQSHYEEEH). The segment at 99–262 (RSHLSDFKKH…HCKDKLLKRE (164 aa)) is necessary for the correct targeting to endosomes. The FYVE-type zinc-finger motif lies at 156–259 (DQDVPFCPDC…CCTHCKDKLL (104 aa)). Zn(2+) contacts are provided by Cys162, Cys165, Cys178, Cys181, Cys186, and Cys189. Positions 206–223 (KDSLSTHTSPSQSPNSVH) are enriched in polar residues. Positions 206-240 (KDSLSTHTSPSQSPNSVHGSRRGSISSMSSVSSVL) are disordered. Residues Ser214, Ser218, Ser225, and Ser229 each carry the phosphoserine modification. The span at 227 to 239 (RGSISSMSSVSSV) shows a compositional bias: low complexity. 2 residues coordinate Zn(2+): Cys251 and Cys254. Positions 263 to 499 (QQMDEKEHTP…QLQDEYDQQQ (237 aa)) are necessary for interaction with RAB4A. A necessary for interaction with EHD1 region spans residues 263–783 (QQMDEKEHTP…TLAKQKGAPN (521 aa)). Coiled coils occupy residues 377–412 (TKEQFEELKKKRKQDLEQKRTVERQAALESRRKLEE) and 471–531 (QAKA…ELER). Composition is skewed to basic and acidic residues over residues 387-399 (KRKQDLEQKRTVE) and 405-414 (ESRRKLEERQ). Residues 387–433 (KRKQDLEQKRTVERQAALESRRKLEERQSGLASHTANGDVRSLRGIP) form a disordered region. A UIM domain is found at 495-514 (YDQQQTEKAIELSRKQAEEE). Disordered stretches follow at residues 569 to 638 (SYSL…SPTE) and 663 to 733 (FEED…EEHI). 2 stretches are compositionally biased toward polar residues: residues 571–584 (SLDQDSSPVQSSTA) and 610–623 (TLPQSTMSQQSDKA). The segment at 627 to 783 (PFDEDDLSSP…TLAKQKGAPN (157 aa)) is necessary for interaction with RAB5A. Positions 663-673 (FEEDAEEEEVA) are enriched in acidic residues. Ser686 is subject to Phosphoserine. Residues 721 to 733 (VDSDSGMEAEEHI) show a composition bias toward acidic residues.

In terms of assembly, interacts with EHD1, RAB4A, RAB5A, RAB22A, RAB24 and VPS45. Binds simultaneously to RAB4A and RAB5A in vitro. Interacts with RAB4A and RAB5A that has been activated by GTP binding.

It is found in the cell membrane. Its subcellular location is the early endosome membrane. Rab4/Rab5 effector protein acting in early endocytic membrane fusion and membrane trafficking of recycling endosomes. Required for endosome fusion either homotypically or with clathrin coated vesicles. Plays a role in the lysosomal trafficking of CTSD/cathepsin D from the Golgi to lysosomes. Also promotes the recycling of transferrin directly from early endosomes to the plasma membrane. Binds phospholipid vesicles containing phosphatidylinositol 3-phosphate (PtdInsP3). Plays a role in the recycling of transferrin receptor to the plasma membrane. The chain is Rabenosyn-5 from Mus musculus (Mouse).